The following is a 1847-amino-acid chain: Cilia- and flagella-associated protein 65 (1847 aa).

The helical transmembrane segment at 112–132 (FFTIIPQPIFLSPGITLTLPI) threads the bilayer. Residues 805 to 914 (DLKLDTHKSI…VHYRIRLVGM (110 aa)) enclose the MSP domain. Positions 1457–1483 (QRELMRQYHKELQEWNEEKARQEVEFT) form a coiled coil. The disordered stretch occupies residues 1668 to 1721 (YEGRKSKEQEEDLFGKMPGGQEDDEEEEEDEEEAEEEEEEIEEEMSKDEEDIDK). The segment covering 1688–1720 (QEDDEEEEEDEEEAEEEEEEIEEEMSKDEEDID) has biased composition (acidic residues).

This sequence belongs to the CFAP65 family. In terms of assembly, interacts with CFAP47. Predominantly expressed in testis. Highly expressed in round and elongating spermatids. Expressed also in certain ciliated organs, such as the brain, lung and kidney.

It is found in the cell projection. The protein resides in the cilium. The protein localises to the flagellum membrane. Its subcellular location is the cytoplasmic vesicle. It localises to the secretory vesicle. It is found in the acrosome membrane. The protein resides in the cytoplasm. Its function is as follows. Plays a role in flagellar formation and sperm motility. This is Cilia- and flagella-associated protein 65 from Mus musculus (Mouse).